The following is a 174-amino-acid chain: MLNFLNICSKTRKSWVLLIFTVVILELIALYLQHIVLIKPCVLCVYQRCALCGIGIAGLIGTIAPFTPLRFFSIPIWIYSAWKGLLLAKEYTDIQLHPSPFFMCDLFVQFPHWLPLNKWWPSMFDADGDCAEYKWYFLSLEISQWMLIIFANYLIIAILVSLSQIIDLKKWNNK.

The Cytoplasmic segment spans residues 1-14; the sequence is MLNFLNICSKTRKS. Residues 15–31 traverse the membrane as a helical segment; the sequence is WVLLIFTVVILELIALY. Residues 32 to 49 are Periplasmic-facing; sequence LQHIVLIKPCVLCVYQRC. Cysteine 41 and cysteine 44 form a disulfide bridge. A helical membrane pass occupies residues 50 to 65; it reads ALCGIGIAGLIGTIAP. The Cytoplasmic segment spans residues 66 to 71; sequence FTPLRF. A helical transmembrane segment spans residues 72 to 89; the sequence is FSIPIWIYSAWKGLLLAK. At 90 to 144 the chain is on the periplasmic side; the sequence is EYTDIQLHPSPFFMCDLFVQFPHWLPLNKWWPSMFDADGDCAEYKWYFLSLEISQ. Cysteine 104 and cysteine 130 are disulfide-bonded. The helical transmembrane segment at 145-163 threads the bilayer; the sequence is WMLIIFANYLIIAILVSLS. Over 164–174 the chain is Cytoplasmic; the sequence is QIIDLKKWNNK.

The protein belongs to the DsbB family.

Its subcellular location is the cell inner membrane. Its function is as follows. Required for disulfide bond formation in some periplasmic proteins. Acts by oxidizing the DsbA protein. The protein is Disulfide bond formation protein B of Blochmanniella pennsylvanica (strain BPEN).